Consider the following 480-residue polypeptide: Serine/threonine-protein kinase WAG2 (480 aa).

In terms of domain architecture, Protein kinase spans L88–F396. Residues L94–V102 and K117 each bind ATP. The active-site Proton acceptor is the D213.

It belongs to the protein kinase superfamily. Ser/Thr protein kinase family. As to expression, expressed in root tips, lateral root primordia and emerging true leaf primordia.

The protein localises to the cytoplasm. It localises to the cytosol. The catalysed reaction is L-seryl-[protein] + ATP = O-phospho-L-seryl-[protein] + ADP + H(+). It catalyses the reaction L-threonyl-[protein] + ATP = O-phospho-L-threonyl-[protein] + ADP + H(+). Its function is as follows. Serine/threonine-protein kinase involved in the regulation of auxin signaling. Acts as a positive regulator of cellular auxin efflux and regulates organ development by enhancing PIN-mediated polar auxin transport. Phosphorylates conserved serine residues in the PIN auxin efflux carriers. Phosphorylation of PIN proteins is required and sufficient for apical-basal PIN polarity that enables directional intercellular auxin fluxes, which mediate differential growth, tissue patterning and organogenesis. Acts as a suppressor of root waving. In Arabidopsis thaliana (Mouse-ear cress), this protein is Serine/threonine-protein kinase WAG2 (WAG2).